Consider the following 241-residue polypeptide: Sugar fermentation stimulation protein homolog (241 aa).

This sequence belongs to the SfsA family.

In Yersinia enterocolitica serotype O:8 / biotype 1B (strain NCTC 13174 / 8081), this protein is Sugar fermentation stimulation protein homolog.